We begin with the raw amino-acid sequence, 674 residues long: DNA ligase (674 aa).

NAD(+) contacts are provided by residues 36–40, 85–86, and Glu116; these read DSVYD and SL. Lys118 serves as the catalytic N6-AMP-lysine intermediate. NAD(+) contacts are provided by Arg139, Glu176, Lys292, and Lys316. Cys410, Cys413, Cys428, and Cys433 together coordinate Zn(2+). The 79-residue stretch at 596–674 folds into the BRCT domain; that stretch reads PSSGNIAGKT…EADLLKFLTN (79 aa).

This sequence belongs to the NAD-dependent DNA ligase family. LigA subfamily. Mg(2+) serves as cofactor. Requires Mn(2+) as cofactor.

It carries out the reaction NAD(+) + (deoxyribonucleotide)n-3'-hydroxyl + 5'-phospho-(deoxyribonucleotide)m = (deoxyribonucleotide)n+m + AMP + beta-nicotinamide D-nucleotide.. In terms of biological role, DNA ligase that catalyzes the formation of phosphodiester linkages between 5'-phosphoryl and 3'-hydroxyl groups in double-stranded DNA using NAD as a coenzyme and as the energy source for the reaction. It is essential for DNA replication and repair of damaged DNA. In Rippkaea orientalis (strain PCC 8801 / RF-1) (Cyanothece sp. (strain PCC 8801)), this protein is DNA ligase.